The sequence spans 289 residues: ATP synthase gamma chain (289 aa).

Belongs to the ATPase gamma chain family. In terms of assembly, F-type ATPases have 2 components, CF(1) - the catalytic core - and CF(0) - the membrane proton channel. CF(1) has five subunits: alpha(3), beta(3), gamma(1), delta(1), epsilon(1). CF(0) has three main subunits: a, b and c.

It is found in the cell inner membrane. Functionally, produces ATP from ADP in the presence of a proton gradient across the membrane. The gamma chain is believed to be important in regulating ATPase activity and the flow of protons through the CF(0) complex. This chain is ATP synthase gamma chain, found in Pasteurella multocida (strain Pm70).